A 148-amino-acid polypeptide reads, in one-letter code: Deoxyuridine 5'-triphosphate nucleotidohydrolase (148 aa).

Substrate-binding positions include 67–69 (RSG), N80, 84–86 (LID), and M94.

Belongs to the dUTPase family. The cofactor is Mg(2+).

The catalysed reaction is dUTP + H2O = dUMP + diphosphate + H(+). The protein operates within pyrimidine metabolism; dUMP biosynthesis; dUMP from dCTP (dUTP route): step 2/2. Functionally, this enzyme is involved in nucleotide metabolism: it produces dUMP, the immediate precursor of thymidine nucleotides and it decreases the intracellular concentration of dUTP so that uracil cannot be incorporated into DNA. This chain is Deoxyuridine 5'-triphosphate nucleotidohydrolase, found in Ralstonia nicotianae (strain ATCC BAA-1114 / GMI1000) (Ralstonia solanacearum).